Reading from the N-terminus, the 741-residue chain is Phosphoribosylformylglycinamidine synthase subunit PurL (741 aa).

The active site involves His53. Tyr56 and Lys95 together coordinate ATP. Glu97 contacts Mg(2+). Substrate is bound by residues Ser98–His101 and Arg120. Catalysis depends on His99, which acts as the Proton acceptor. Asp121 lines the Mg(2+) pocket. Position 244 (Gln244) interacts with substrate. Residue Asp274 participates in Mg(2+) binding. Glu318–Gln320 is a binding site for substrate. Positions 501 and 538 each coordinate ATP. Residue Asn539 participates in Mg(2+) binding. A substrate-binding site is contributed by Ser541.

The protein belongs to the FGAMS family. As to quaternary structure, monomer. Part of the FGAM synthase complex composed of 1 PurL, 1 PurQ and 2 PurS subunits.

The protein localises to the cytoplasm. The catalysed reaction is N(2)-formyl-N(1)-(5-phospho-beta-D-ribosyl)glycinamide + L-glutamine + ATP + H2O = 2-formamido-N(1)-(5-O-phospho-beta-D-ribosyl)acetamidine + L-glutamate + ADP + phosphate + H(+). The protein operates within purine metabolism; IMP biosynthesis via de novo pathway; 5-amino-1-(5-phospho-D-ribosyl)imidazole from N(2)-formyl-N(1)-(5-phospho-D-ribosyl)glycinamide: step 1/2. Part of the phosphoribosylformylglycinamidine synthase complex involved in the purines biosynthetic pathway. Catalyzes the ATP-dependent conversion of formylglycinamide ribonucleotide (FGAR) and glutamine to yield formylglycinamidine ribonucleotide (FGAM) and glutamate. The FGAM synthase complex is composed of three subunits. PurQ produces an ammonia molecule by converting glutamine to glutamate. PurL transfers the ammonia molecule to FGAR to form FGAM in an ATP-dependent manner. PurS interacts with PurQ and PurL and is thought to assist in the transfer of the ammonia molecule from PurQ to PurL. The chain is Phosphoribosylformylglycinamidine synthase subunit PurL from Limosilactobacillus fermentum (strain NBRC 3956 / LMG 18251) (Lactobacillus fermentum).